The chain runs to 520 residues: Sterile alpha motif domain-containing protein 3 (520 aa).

Positions 4–71 (WSVDQVCKWL…KYKQGNQELK (68 aa)) constitute an SAM domain. Residues 67 to 104 (NQELKPTGGPADTSTLTPAQAAPEHEQNPSPTSHGDQT) form a disordered region. Residues 94-104 (NPSPTSHGDQT) are compositionally biased toward polar residues.

This chain is Sterile alpha motif domain-containing protein 3 (Samd3), found in Mus musculus (Mouse).